The primary structure comprises 549 residues: Oxygen-dependent choline dehydrogenase (549 aa).

D4 to E33 provides a ligand contact to FAD. H465 functions as the Proton acceptor in the catalytic mechanism.

It belongs to the GMC oxidoreductase family. FAD is required as a cofactor.

It carries out the reaction choline + A = betaine aldehyde + AH2. The catalysed reaction is betaine aldehyde + NAD(+) + H2O = glycine betaine + NADH + 2 H(+). Its pathway is amine and polyamine biosynthesis; betaine biosynthesis via choline pathway; betaine aldehyde from choline (cytochrome c reductase route): step 1/1. Involved in the biosynthesis of the osmoprotectant glycine betaine. Catalyzes the oxidation of choline to betaine aldehyde and betaine aldehyde to glycine betaine at the same rate. The sequence is that of Oxygen-dependent choline dehydrogenase from Rhizobium rhizogenes (strain K84 / ATCC BAA-868) (Agrobacterium radiobacter).